Reading from the N-terminus, the 300-residue chain is Protein THYLAKOID FORMATION 1, chloroplastic (300 aa).

The transit peptide at 1 to 67 directs the protein to the chloroplast; sequence MAATAISSLS…SNVTADVPPV (67 aa). Topologically, residues 68-196 are chloroplast intermembrane; it reads SETKSKFLKA…IAGRAGSKEG (129 aa). A helical transmembrane segment spans residues 197-219; it reads FSYSRFFAVGLFRLLELASATDP. Topologically, residues 220–300 are cytoplasmic; sequence TVLDKLCASL…NPSFLVERKS (81 aa). A coiled-coil region spans residues 239–268; the sequence is DLDVYRNLLSKLVQAKELLKEYVEREKKKQ.

It belongs to the THF1 family. In terms of assembly, interacts with GPA1. In terms of tissue distribution, ubiquitous. Present at higher level in hypocotyls (at protein level). Ubiquitously expressed in all organs, in roots of both light-grown and dark-grown seedlings. Highly expressed in the root apical meristems.

It is found in the plastid. The protein resides in the chloroplast outer membrane. The protein localises to the chloroplast stroma. Its function is as follows. Involved in a dynamic process of vesicle-mediated thylakoid membrane biogenesis. Required for the normal organization of vesicles into mature thylakoid stacks and ultimately for leaf development. Also involved in a sugar-signaling mechanism in roots by mediating signaling between the plasma membrane and the plastid. Probably acts downstream of the plasma membrane-delimited heterotrimeric G-protein GPA1 in a D-glucose signaling pathway. This chain is Protein THYLAKOID FORMATION 1, chloroplastic (THF1), found in Arabidopsis thaliana (Mouse-ear cress).